The chain runs to 292 residues: Formamidopyrimidine-DNA glycosylase (292 aa).

P2 (schiff-base intermediate with DNA) is an active-site residue. The active-site Proton donor is E3. Residue K58 is the Proton donor; for beta-elimination activity of the active site. DNA-binding residues include H103, R122, and K165. An FPG-type zinc finger spans residues 256–292 (RVYDRALHPCPTPGCKGEISRITQGGRSSFFCSMCQK). Catalysis depends on R282, which acts as the Proton donor; for delta-elimination activity.

Belongs to the FPG family. Monomer. The cofactor is Zn(2+).

It catalyses the reaction Hydrolysis of DNA containing ring-opened 7-methylguanine residues, releasing 2,6-diamino-4-hydroxy-5-(N-methyl)formamidopyrimidine.. The enzyme catalyses 2'-deoxyribonucleotide-(2'-deoxyribose 5'-phosphate)-2'-deoxyribonucleotide-DNA = a 3'-end 2'-deoxyribonucleotide-(2,3-dehydro-2,3-deoxyribose 5'-phosphate)-DNA + a 5'-end 5'-phospho-2'-deoxyribonucleoside-DNA + H(+). Involved in base excision repair of DNA damaged by oxidation or by mutagenic agents. Acts as a DNA glycosylase that recognizes and removes damaged bases. Has a preference for oxidized purines, such as 7,8-dihydro-8-oxoguanine (8-oxoG). Has AP (apurinic/apyrimidinic) lyase activity and introduces nicks in the DNA strand. Cleaves the DNA backbone by beta-delta elimination to generate a single-strand break at the site of the removed base with both 3'- and 5'-phosphates. The protein is Formamidopyrimidine-DNA glycosylase of Methylocella silvestris (strain DSM 15510 / CIP 108128 / LMG 27833 / NCIMB 13906 / BL2).